The sequence spans 273 residues: Large ribosomal subunit protein uL2 (273 aa).

The disordered stretch occupies residues 221-262; that stretch reads RGTAMNPVDHPHGGGEGRNFGKHPVTPWGVQTKGKKTRHNKR. The span at 253–262 shows a compositional bias: basic residues; the sequence is KGKKTRHNKR.

Belongs to the universal ribosomal protein uL2 family. In terms of assembly, part of the 50S ribosomal subunit. Forms a bridge to the 30S subunit in the 70S ribosome.

One of the primary rRNA binding proteins. Required for association of the 30S and 50S subunits to form the 70S ribosome, for tRNA binding and peptide bond formation. It has been suggested to have peptidyltransferase activity; this is somewhat controversial. Makes several contacts with the 16S rRNA in the 70S ribosome. This Haemophilus ducreyi (strain 35000HP / ATCC 700724) protein is Large ribosomal subunit protein uL2.